The primary structure comprises 315 residues: Olfactory receptor 10H2 (315 aa).

The Extracellular segment spans residues 1–25; the sequence is MLGLNHTSMSEFILVGFSAFPHLQL. The N-linked (GlcNAc...) asparagine glycan is linked to asparagine 5. Residues 26-46 form a helical membrane-spanning segment; that stretch reads MLFLLFLLMYLFTLLGNLLIM. Over 47–54 the chain is Cytoplasmic; sequence ATVWSERS. The chain crosses the membrane as a helical span at residues 55–75; sequence LHTPMYLFLCVLSVSEILYTV. Over 76-99 the chain is Extracellular; the sequence is AIIPRMLADLLSTQRSIAFLACAS. A disulfide bridge connects residues cysteine 97 and cysteine 189. The chain crosses the membrane as a helical span at residues 100–120; sequence QMFFSFSFGFTHSFLLTVMGY. At 121–139 the chain is on the cytoplasmic side; it reads DRYVAICHPLRYNVLMSPR. Residues 140–160 form a helical membrane-spanning segment; the sequence is GCACLVGCSWAGGSVMGMVVT. At 161-197 the chain is on the extracellular side; the sequence is SAIFQLTFCGSHEIQHFLCHVPPLLKLACGNNVPAVA. Residues 198-218 traverse the membrane as a helical segment; the sequence is LGVGLVCIMALLGCFLLILLS. Residues 219-238 are Cytoplasmic-facing; that stretch reads YAFIVADILKIPSAEGRNKA. The helical transmembrane segment at 239-259 threads the bilayer; sequence FSTCASHLIVVIVHYGFASVI. Residues 260 to 272 lie on the Extracellular side of the membrane; it reads YLKPKGPHSQEGD. The chain crosses the membrane as a helical span at residues 273-293; the sequence is TLMATTYAVLTPFLSPIIFSL. Residues 294 to 315 are Cytoplasmic-facing; it reads RNKELKVAMKRTFLSTLYSSGT.

This sequence belongs to the G-protein coupled receptor 1 family.

It is found in the cell membrane. Its function is as follows. Odorant receptor. This chain is Olfactory receptor 10H2 (OR10H2), found in Homo sapiens (Human).